We begin with the raw amino-acid sequence, 518 residues long: Crotonobetaine/carnitine--CoA ligase (518 aa).

This sequence belongs to the ATP-dependent AMP-binding enzyme family.

The enzyme catalyses 4-(trimethylamino)butanoate + ATP + CoA = 4-(trimethylamino)butanoyl-CoA + AMP + diphosphate. It carries out the reaction crotonobetaine + ATP + CoA = crotonobetainyl-CoA + AMP + diphosphate. It catalyses the reaction (R)-carnitine + ATP + CoA = (R)-carnitinyl-CoA + AMP + diphosphate. It functions in the pathway amine and polyamine metabolism; carnitine metabolism. Catalyzes the transfer of CoA to carnitine, generating the initial carnitinyl-CoA needed for the CaiB reaction cycle. Also has activity toward crotonobetaine and gamma-butyrobetaine. This is Crotonobetaine/carnitine--CoA ligase from Proteus mirabilis (strain HI4320).